A 204-amino-acid polypeptide reads, in one-letter code: MDSLISIPFLNDESVRSTIYRKVEEFRSIGKSSKEVLFKELVFCILAANTSASMSLRMQESIGDGFLYLSRDDLRKALKENKYRFYNVRSDFIVKSRNIIDDLPALVASPDHEGSRDYLVENVYGIGYKEASHFLRNVGIFDFAILDKHIMKWMAQYYPVKKNTSRKNYLYNEEIFRNISAGFGIEPGILDLFIWYEETGTVIK.

Active-site residues include Lys-129 and Asp-147.

The protein belongs to the type-2 OGG1 family.

It catalyses the reaction 2'-deoxyribonucleotide-(2'-deoxyribose 5'-phosphate)-2'-deoxyribonucleotide-DNA = a 3'-end 2'-deoxyribonucleotide-(2,3-dehydro-2,3-deoxyribose 5'-phosphate)-DNA + a 5'-end 5'-phospho-2'-deoxyribonucleoside-DNA + H(+). Functionally, catalyzes the excision of an oxidatively damaged form of guanine (7,8-dihydro-8-oxoguanine = 8-oxoG) from DNA. Also cleaves the DNA backbone at apurinic/apyrimidinic sites (AP sites). The protein is 8-oxoguanine DNA glycosylase/AP lyase of Thermoplasma acidophilum (strain ATCC 25905 / DSM 1728 / JCM 9062 / NBRC 15155 / AMRC-C165).